We begin with the raw amino-acid sequence, 310 residues long: Probable GTP 3',8-cyclase (310 aa).

The 214-residue stretch at 5 to 218 folds into the Radical SAM core domain; the sequence is KYGRSLQKLR…VNIIFELGGR (214 aa). Position 14 (arginine 14) interacts with GTP. Positions 21, 25, and 28 each coordinate [4Fe-4S] cluster. Lysine 62 is a GTP binding site. S-adenosyl-L-methionine is bound at residue glycine 66. A GTP-binding site is contributed by threonine 91. Serine 115 contacts S-adenosyl-L-methionine. Lysine 153 contributes to the GTP binding site. 3 residues coordinate [4Fe-4S] cluster: cysteine 251, cysteine 254, and cysteine 268.

Belongs to the radical SAM superfamily. MoaA family. It depends on [4Fe-4S] cluster as a cofactor.

The catalysed reaction is GTP + AH2 + S-adenosyl-L-methionine = (8S)-3',8-cyclo-7,8-dihydroguanosine 5'-triphosphate + 5'-deoxyadenosine + L-methionine + A + H(+). It functions in the pathway cofactor biosynthesis; molybdopterin biosynthesis. Its function is as follows. Catalyzes the cyclization of GTP to (8S)-3',8-cyclo-7,8-dihydroguanosine 5'-triphosphate. This Pyrobaculum aerophilum (strain ATCC 51768 / DSM 7523 / JCM 9630 / CIP 104966 / NBRC 100827 / IM2) protein is Probable GTP 3',8-cyclase.